Consider the following 297-residue polypeptide: Small ribosomal subunit protein uS2 (297 aa).

A disordered region spans residues 266–297 (GASWDAAEPSDWAATPAAAGQEWAASGATEQW). Residues 282–297 (AAAGQEWAASGATEQW) show a composition bias toward low complexity.

This sequence belongs to the universal ribosomal protein uS2 family. As to quaternary structure, component of the small ribosomal subunit. Mature ribosomes consist of a small (40S) and a large (60S) subunit. The 40S subunit contains about 33 different proteins and 1 molecule of RNA (18S). The 60S subunit contains about 49 different proteins and 3 molecules of RNA (25S, 5.8S and 5S). Interacts with rps21.

The protein localises to the cytoplasm. In terms of biological role, required for the assembly and/or stability of the 40S ribosomal subunit. Required for the processing of the 20S rRNA-precursor to mature 18S rRNA in a late step of the maturation of 40S ribosomal subunits. This Sclerotinia sclerotiorum (strain ATCC 18683 / 1980 / Ss-1) (White mold) protein is Small ribosomal subunit protein uS2 (rps0).